Reading from the N-terminus, the 180-residue chain is Adenine phosphoribosyltransferase (180 aa).

Ser2 carries the post-translational modification N-acetylserine. Residues Ser15 and Ser30 each carry the phosphoserine modification. Phosphotyrosine is present on Tyr60. Residue Ser66 is modified to Phosphoserine. Lys114 bears the N6-acetyllysine mark. At Thr135 the chain carries Phosphothreonine.

Belongs to the purine/pyrimidine phosphoribosyltransferase family. As to quaternary structure, homodimer.

The protein localises to the cytoplasm. The catalysed reaction is AMP + diphosphate = 5-phospho-alpha-D-ribose 1-diphosphate + adenine. It participates in purine metabolism; AMP biosynthesis via salvage pathway; AMP from adenine: step 1/1. Its function is as follows. Catalyzes a salvage reaction resulting in the formation of AMP, that is energically less costly than de novo synthesis. The protein is Adenine phosphoribosyltransferase of Stochomys longicaudatus (Target rat).